A 1528-amino-acid polypeptide reads, in one-letter code: Cell surface antigen I/II (1528 aa).

The signal sequence occupies residues 1–50 (MLQKCKLEGIIICNEKRLLGAAKVKSGRTLSGALLGTAILASGAGQKALA). Residues 50–156 (AEETSTTSTS…PEIKDDYSKQ (107 aa)) are disordered. The segment covering 51-68 (EETSTTSTSGGDTAVVGT) has biased composition (low complexity). 2 stretches are compositionally biased toward polar residues: residues 83 to 97 (NPSS…QARQ) and 124 to 133 (TVSQDATVNK). Residues 142-154 (ANQKEPEIKDDYS) are compositionally biased toward basic and acidic residues. Ag I/II A repeat units follow at residues 161 to 235 (QKAT…QQAN), 236 to 315 (SDSQ…QAGN), 316 to 396 (AANE…QSGN), and 397 to 478 (AANE…KKDL). Disordered regions lie at residues 840 to 951 (VPKV…VEPV) and 1459 to 1480 (SNTV…PKTT). The span at 855 to 879 (TKPDEPTYEVEKELVDLPVEPKYEP) shows a compositional bias: basic and acidic residues. Polar residues predominate over residues 1459-1468 (SNTVRTSTPE). An LPXTG sorting signal motif is present at residues 1503–1507 (LPATG). At Thr1506 the chain carries Pentaglycyl murein peptidoglycan amidated threonine. A propeptide spans 1507–1528 (GDSSNAYLPLLGLVSLTAGFSC) (removed by sortase).

It belongs to the antigen I/II family.

It is found in the secreted. The protein localises to the cell wall. This Streptococcus downei (Streptococcus sobrinus) protein is Cell surface antigen I/II.